The primary structure comprises 140 residues: GGSDVSAFLAKVDKRAVGGEALARLLIVYPWTQRYFSTFGNLGSADAISHNSKVLAHGQRVLDSIEEGLKHPZBLKAYYAKLSERHSGELHVDPANFYRLGNVLITVMARHFHEEFTPELQCALHSSFCAVGEALAKGYH.

Residues 1–140 enclose the Globin domain; the sequence is GGSDVSAFLA…VGEALAKGYH (140 aa). The heme b site is built by His57 and His86.

It belongs to the globin family. Heterotetramer of either two alpha-B chains or two alpha-C chains and two beta chains.

Functionally, the beta chain is a component of adult hemoglobins B. And C. This chain is Hemoglobin subunit beta (HBB), found in Aquarana catesbeiana (American bullfrog).